The sequence spans 415 residues: Gamma-glutamyl phosphate reductase (415 aa).

The protein belongs to the gamma-glutamyl phosphate reductase family.

It localises to the cytoplasm. The catalysed reaction is L-glutamate 5-semialdehyde + phosphate + NADP(+) = L-glutamyl 5-phosphate + NADPH + H(+). It functions in the pathway amino-acid biosynthesis; L-proline biosynthesis; L-glutamate 5-semialdehyde from L-glutamate: step 2/2. Its function is as follows. Catalyzes the NADPH-dependent reduction of L-glutamate 5-phosphate into L-glutamate 5-semialdehyde and phosphate. The product spontaneously undergoes cyclization to form 1-pyrroline-5-carboxylate. The sequence is that of Gamma-glutamyl phosphate reductase from Dictyoglomus turgidum (strain DSM 6724 / Z-1310).